Reading from the N-terminus, the 344-residue chain is Phenylalanine--tRNA ligase alpha subunit (344 aa).

Glutamate 256 serves as a coordination point for Mg(2+).

It belongs to the class-II aminoacyl-tRNA synthetase family. Phe-tRNA synthetase alpha subunit type 1 subfamily. Tetramer of two alpha and two beta subunits. The cofactor is Mg(2+).

Its subcellular location is the cytoplasm. The catalysed reaction is tRNA(Phe) + L-phenylalanine + ATP = L-phenylalanyl-tRNA(Phe) + AMP + diphosphate + H(+). This is Phenylalanine--tRNA ligase alpha subunit from Shouchella clausii (strain KSM-K16) (Alkalihalobacillus clausii).